A 302-amino-acid polypeptide reads, in one-letter code: Proline dehydrogenase 1 (302 aa).

Residue lysine 95 participates in substrate binding. Aspartate 129 is a catalytic residue. Positions 130 and 158 each coordinate FAD. Residue arginine 179 is part of the active site. FAD-binding positions include 182–184 and 221–222; these read KGA and TH. 283 to 284 serves as a coordination point for substrate; sequence RR.

Belongs to the proline dehydrogenase family. FAD serves as cofactor.

The enzyme catalyses L-proline + a quinone = (S)-1-pyrroline-5-carboxylate + a quinol + H(+). It functions in the pathway amino-acid degradation; L-proline degradation into L-glutamate; L-glutamate from L-proline: step 1/2. Its function is as follows. Converts proline to delta-1-pyrroline-5-carboxylate. In Bacillus subtilis (strain 168), this protein is Proline dehydrogenase 1 (fadM).